Here is a 102-residue protein sequence, read N- to C-terminus: Thioredoxin (102 aa).

Residues 1 to 102 form the Thioredoxin domain; it reads MVQIVSQDNF…SLVKLISKHQ (102 aa). A disulfide bridge links C28 with C31.

It belongs to the thioredoxin family.

In terms of biological role, participates in various redox reactions through the reversible oxidation of its active center dithiol to a disulfide and catalyzes dithiol-disulfide exchange reactions. The chain is Thioredoxin (trxA) from Chlamydia muridarum (strain MoPn / Nigg).